The primary structure comprises 141 residues: Large ribosomal subunit protein uL11 (141 aa).

The protein belongs to the universal ribosomal protein uL11 family. Part of the ribosomal stalk of the 50S ribosomal subunit. Interacts with L10 and the large rRNA to form the base of the stalk. L10 forms an elongated spine to which L12 dimers bind in a sequential fashion forming a multimeric L10(L12)X complex. Post-translationally, one or more lysine residues are methylated.

Functionally, forms part of the ribosomal stalk which helps the ribosome interact with GTP-bound translation factors. This chain is Large ribosomal subunit protein uL11, found in Syntrophus aciditrophicus (strain SB).